Reading from the N-terminus, the 344-residue chain is MAKIRVLVVDDSATMRSLISAALNRDPDIEVVGGAGDPFEARGMIKALNPDVVTLDIEMPNMNGIDFLEKIMRLRPMPVVMVSTLTQAGAEMTLRALELGAVDCVGKPADATGTQEALAEIVAKVKIAARASVRTNAGAAPTSAPTRRKDFMPSGDIVAIGSSTGGVEALLSILQLFPETCPPTVITQHMPATFTASFAARLDRSSGAKVQEASDGALLEPGKVYVAPGGATHLEVVRSAGLRCRLVAGDPVSGHRPSVDVLFNSVAHAVGDKAVGVILTGMGRDGAQGLLTMRKAGAKTLGQDEASCVVYGMPRSAFEIGAVERQVSLSSMGQSILDLASARR.

The Response regulatory domain occupies 5–122; sequence RVLVVDDSAT…GTQEALAEIV (118 aa). At Asp-56 the chain carries 4-aspartylphosphate. The region spanning 151–343 is the CheB-type methylesterase domain; it reads FMPSGDIVAI…QSILDLASAR (193 aa). Catalysis depends on residues Ser-163, His-189, and Asp-285.

It belongs to the CheB family. Post-translationally, phosphorylated by CheA. Phosphorylation of the N-terminal regulatory domain activates the methylesterase activity.

The protein resides in the cytoplasm. The catalysed reaction is [protein]-L-glutamate 5-O-methyl ester + H2O = L-glutamyl-[protein] + methanol + H(+). It catalyses the reaction L-glutaminyl-[protein] + H2O = L-glutamyl-[protein] + NH4(+). Functionally, involved in chemotaxis. Part of a chemotaxis signal transduction system that modulates chemotaxis in response to various stimuli. Catalyzes the demethylation of specific methylglutamate residues introduced into the chemoreceptors (methyl-accepting chemotaxis proteins or MCP) by CheR. Also mediates the irreversible deamidation of specific glutamine residues to glutamic acid. The chain is Protein-glutamate methylesterase/protein-glutamine glutaminase 1 from Caulobacter vibrioides (strain ATCC 19089 / CIP 103742 / CB 15) (Caulobacter crescentus).